A 233-amino-acid polypeptide reads, in one-letter code: Large ribosomal subunit protein uL1 (233 aa).

This sequence belongs to the universal ribosomal protein uL1 family. In terms of assembly, part of the 50S ribosomal subunit.

Binds directly to 23S rRNA. The L1 stalk is quite mobile in the ribosome, and is involved in E site tRNA release. In terms of biological role, protein L1 is also a translational repressor protein, it controls the translation of the L11 operon by binding to its mRNA. This is Large ribosomal subunit protein uL1 from Thermotoga sp. (strain RQ2).